The primary structure comprises 179 residues: Inner membrane-spanning protein YciB (179 aa).

The next 5 membrane-spanning stretches (helical) occupy residues 22 to 42, 50 to 70, 76 to 96, 121 to 141, and 149 to 169; these read IYAA…YSWV, MALI…FFHN, WKVT…QWVM, LAWA…AFWL, and FKVF…GVYI.

This sequence belongs to the YciB family.

Its subcellular location is the cell inner membrane. Its function is as follows. Plays a role in cell envelope biogenesis, maintenance of cell envelope integrity and membrane homeostasis. The chain is Inner membrane-spanning protein YciB from Salmonella dublin (strain CT_02021853).